A 389-amino-acid chain; its full sequence is MLQESIKKLVQYGIDMGLTPECERIYTTNLLLECMKEDEYIDPDCDLSNIILEDVLKELLDEAVNRGIIEDSVTHRDLFDTKLMNQLCPRPKQVIDDFNRIYDNHGPIAATDYFYKLSKASDYIRTYRVKKDLKWTCDTEYGTLDITINLSKPEKDPKAIAAAKNAKQSTYPKCQLCMENEGYAGRINHPARENHRIIPITINNSNWGFQYSPYVYYNEHCIVFNGEHTPMKIERATFVKLFDFIKLFPHYFLGSNADLPIVGGSILSHDHFQGGHYTFAMEKAPIIQEFTVKGYEDVKAGIVKWPLSVIRLQCKDETRLIDLATNILDKWRNYTDEEAYIFAETDGEPHNTITPIARKRGDYFELDPLESTCRHASLALAVVLQRRDW.

It belongs to the galactose-1-phosphate uridylyltransferase type 2 family.

It localises to the cytoplasm. It catalyses the reaction alpha-D-galactose 1-phosphate + UDP-alpha-D-glucose = alpha-D-glucose 1-phosphate + UDP-alpha-D-galactose. Its pathway is carbohydrate metabolism; galactose metabolism. The chain is Galactose-1-phosphate uridylyltransferase (galT) from Butyrivibrio fibrisolvens.